A 204-amino-acid chain; its full sequence is Ricin B-like lectin R40G3 (204 aa).

The Ricin B-type lectin domain maps to 54–200; sequence TVKVYCRANP…CEGDNQRWKI (147 aa).

In terms of tissue distribution, expressed in shoots and lamina.

In terms of biological role, lectin which binds carbohydrates in vitro. Interacts through its lectin domain with glycan structures containing specific motifs. This Oryza sativa subsp. japonica (Rice) protein is Ricin B-like lectin R40G3.